The sequence spans 392 residues: Glutamyl-tRNA reductase (392 aa).

Residues 38 to 41 (TCNR), Ser-86, 91 to 93 (EDQ), and Gln-97 each bind substrate. Cys-39 (nucleophile) is an active-site residue. 165–170 (GAGEMA) contacts NADP(+).

Belongs to the glutamyl-tRNA reductase family. In terms of assembly, homodimer.

It catalyses the reaction (S)-4-amino-5-oxopentanoate + tRNA(Glu) + NADP(+) = L-glutamyl-tRNA(Glu) + NADPH + H(+). It participates in porphyrin-containing compound metabolism; protoporphyrin-IX biosynthesis; 5-aminolevulinate from L-glutamyl-tRNA(Glu): step 1/2. Its function is as follows. Catalyzes the NADPH-dependent reduction of glutamyl-tRNA(Glu) to glutamate 1-semialdehyde (GSA). This is Glutamyl-tRNA reductase from Methanocaldococcus jannaschii (strain ATCC 43067 / DSM 2661 / JAL-1 / JCM 10045 / NBRC 100440) (Methanococcus jannaschii).